The chain runs to 512 residues: DEAD-box ATP-dependent RNA helicase 5 (512 aa).

Disordered stretches follow at residues 1–33 (MGRS…KLEA) and 45–76 (ATST…GGGK). A coiled-coil region spans residues 14-45 (SRKSKKEKKSKKDKKRKLEAEAEVVVVEAAAA). Residues 16–30 (KSKKEKKSKKDKKRK) show a composition bias toward basic residues. A Q motif motif is present at residues 94-120 (SSFAATALPPQVLDCCKGFERPSPIQA). The Helicase ATP-binding domain maps to 123–300 (WPYLLDGRDF…QEFMDPNPIK (178 aa)). An ATP-binding site is contributed by 136–143 (AATGSGKT). The DEAD box motif lies at 248-251 (DEAD). Residues 333–476 (LLDKYHKAQR…VVPPALTKFG (144 aa)) form the Helicase C-terminal domain.

The protein belongs to the DEAD box helicase family. DDX5/DBP2 subfamily.

Its subcellular location is the nucleus. It is found in the nucleolus. The catalysed reaction is ATP + H2O = ADP + phosphate + H(+). In terms of biological role, ATP-dependent RNA helicase required for 60S ribosomal subunit synthesis. Involved in efficient pre-rRNA processing, predominantly at site A3, which is necessary for the normal formation of 25S and 5.8S rRNAs. This chain is DEAD-box ATP-dependent RNA helicase 5, found in Oryza sativa subsp. japonica (Rice).